We begin with the raw amino-acid sequence, 366 residues long: D-alanine--D-alanine ligase (366 aa).

Residues 149–358 (KIAFDHAGLP…FSELVDTLIQ (210 aa)) enclose the ATP-grasp domain. 185-240 (ETTLEYPCFVKPANLGSSVGIAKVRSRSELETALDNAASYDRRIIVEAGVEAKELE) contacts ATP. Positions 311, 325, and 327 each coordinate Mg(2+).

Belongs to the D-alanine--D-alanine ligase family. Requires Mg(2+) as cofactor. Mn(2+) is required as a cofactor.

It is found in the cytoplasm. The catalysed reaction is 2 D-alanine + ATP = D-alanyl-D-alanine + ADP + phosphate + H(+). The protein operates within cell wall biogenesis; peptidoglycan biosynthesis. Functionally, cell wall formation. The polypeptide is D-alanine--D-alanine ligase (Trichodesmium erythraeum (strain IMS101)).